A 484-amino-acid chain; its full sequence is Dynein regulatory complex subunit 2 (484 aa).

Coiled coils occupy residues 92–160 and 374–403; these read VDCK…RKTI and KEQE…GMEN.

Belongs to the DRC2 family. Component of the nexin-dynein regulatory complex (N-DRC). Interacts with DRC1.

Its subcellular location is the cytoplasm. It is found in the cytoskeleton. It localises to the flagellum basal body. The protein resides in the cell projection. The protein localises to the cilium. Its subcellular location is the flagellum. It is found in the flagellum axoneme. Its function is as follows. Component of the nexin-dynein regulatory complex (N-DRC), a key regulator of ciliary/flagellar motility which maintains the alignment and integrity of the distal axoneme and regulates microtubule sliding in motile axonemes. Plays a critical role in the assembly of N-DRC and also stabilizes the assembly of multiple inner dynein arms and radial spokes. Coassembles with DRC1 to form a central scaffold needed for assembly of the N-DRC and its attachment to the outer doublet microtubules. This is Dynein regulatory complex subunit 2 (CCDC65) from Macaca fascicularis (Crab-eating macaque).